Here is a 484-residue protein sequence, read N- to C-terminus: tRNA sulfurtransferase (484 aa).

A THUMP domain is found at 63–167 (EAFADRLSCI…RENLYLVVNR (105 aa)). ATP contacts are provided by residues 185 to 186 (LI), K267, G289, and Q298. An intrachain disulfide couples C346 to C458. In terms of domain architecture, Rhodanese spans 406-484 (VNSNEVIIDV…GYENVKVYRP (79 aa)). C458 acts as the Cysteine persulfide intermediate in catalysis.

The protein belongs to the ThiI family.

Its subcellular location is the cytoplasm. It carries out the reaction [ThiI sulfur-carrier protein]-S-sulfanyl-L-cysteine + a uridine in tRNA + 2 reduced [2Fe-2S]-[ferredoxin] + ATP + H(+) = [ThiI sulfur-carrier protein]-L-cysteine + a 4-thiouridine in tRNA + 2 oxidized [2Fe-2S]-[ferredoxin] + AMP + diphosphate. The catalysed reaction is [ThiS sulfur-carrier protein]-C-terminal Gly-Gly-AMP + S-sulfanyl-L-cysteinyl-[cysteine desulfurase] + AH2 = [ThiS sulfur-carrier protein]-C-terminal-Gly-aminoethanethioate + L-cysteinyl-[cysteine desulfurase] + A + AMP + 2 H(+). It functions in the pathway cofactor biosynthesis; thiamine diphosphate biosynthesis. Functionally, catalyzes the ATP-dependent transfer of a sulfur to tRNA to produce 4-thiouridine in position 8 of tRNAs, which functions as a near-UV photosensor. Also catalyzes the transfer of sulfur to the sulfur carrier protein ThiS, forming ThiS-thiocarboxylate. This is a step in the synthesis of thiazole, in the thiamine biosynthesis pathway. The sulfur is donated as persulfide by IscS. In Shewanella sediminis (strain HAW-EB3), this protein is tRNA sulfurtransferase.